We begin with the raw amino-acid sequence, 177 residues long: Thioredoxin M-type, chloroplastic (177 aa).

The transit peptide at 1-64 (MAAFTCTSSP…SRLRRGGIIC (64 aa)) directs the protein to the chloroplast. The Thioredoxin domain maps to 65 to 177 (EAQDTATGIP…LATSIDKFLQ (113 aa)). Residues C101 and C104 each act as nucleophile in the active site. A disulfide bond links C101 and C104.

The protein belongs to the thioredoxin family. Plant M-type subfamily. As to quaternary structure, forms a complex with heterodimeric ferredoxin-thioredoxin reductase (FTR) and ferredoxin.

Its subcellular location is the plastid. It localises to the chloroplast. Participates in various redox reactions through the reversible oxidation of the active center dithiol to a disulfide. The M form is known to activate NADP-malate dehydrogenase. The sequence is that of Thioredoxin M-type, chloroplastic from Brassica napus (Rape).